The chain runs to 207 residues: Ribosomal RNA small subunit methyltransferase G (207 aa).

S-adenosyl-L-methionine-binding positions include glycine 73, leucine 78, 124–125, and arginine 139; that span reads VE.

Belongs to the methyltransferase superfamily. RNA methyltransferase RsmG family.

It localises to the cytoplasm. It carries out the reaction guanosine(527) in 16S rRNA + S-adenosyl-L-methionine = N(7)-methylguanosine(527) in 16S rRNA + S-adenosyl-L-homocysteine. Its function is as follows. Specifically methylates the N7 position of guanine in position 527 of 16S rRNA. The chain is Ribosomal RNA small subunit methyltransferase G from Klebsiella pneumoniae (strain 342).